The sequence spans 293 residues: Undecaprenyl-diphosphatase (293 aa).

Helical transmembrane passes span 3–23, 43–63, 85–105, 109–129, 203–223, 238–258, and 269–289; these read IALAIKALILGIVEGLTEFLP, KGKIFEIVIQFGAILAVCWEF, INVIVATIPAITLALIFGKAI, LFNPIVVASAFILGGFVILWA, VATEFSFFLAIPVIFGATVYE, IFAVGFVAAFISAFFCVRWLL, and FAWYRIIFGIIVLATAYTHLI.

It belongs to the UppP family.

The protein localises to the cell inner membrane. It carries out the reaction di-trans,octa-cis-undecaprenyl diphosphate + H2O = di-trans,octa-cis-undecaprenyl phosphate + phosphate + H(+). Functionally, catalyzes the dephosphorylation of undecaprenyl diphosphate (UPP). Confers resistance to bacitracin. The protein is Undecaprenyl-diphosphatase of Ralstonia pickettii (strain 12J).